Reading from the N-terminus, the 382-residue chain is Lycopene beta-cyclase (382 aa).

Residue 6 to 36 (DLILVGAGLANGLIALRLQQQQPDMRILLID) participates in NAD(+) binding.

This sequence belongs to the lycopene cyclase family. FAD is required as a cofactor.

Its subcellular location is the cell inner membrane. The enzyme catalyses a carotenoid psi-end group = a carotenoid beta-end derivative. It carries out the reaction all-trans-lycopene = gamma-carotene. It catalyses the reaction gamma-carotene = all-trans-beta-carotene. The catalysed reaction is all-trans-neurosporene = beta-zeacarotene. The enzyme catalyses beta-zeacarotene = 7,8-dihydro-beta-carotene. Its pathway is carotenoid biosynthesis; beta-carotene biosynthesis. With respect to regulation, activity is increased in the presence of NAD(P)H. NADPH is not involved directly in the cyclization reaction, but must play an indirect role, e.g. as an allosteric activator. Its function is as follows. Catalyzes the double cyclization reaction which converts lycopene to beta-carotene. Also catalyzes the double cyclization reaction which converts neurosporene to 7,8-dihydro-beta-carotene via monocyclic beta-zeacarotene. May also convert zeta-carotene to bicyclic 7,8,7',8'-tetrahydro-beta-carotene. The sequence is that of Lycopene beta-cyclase from Pantoea ananas (Erwinia uredovora).